A 321-amino-acid chain; its full sequence is Phospho-N-acetylmuramoyl-pentapeptide-transferase (321 aa).

9 helical membrane passes run 1 to 21, 53 to 73, 77 to 97, 110 to 130, 145 to 165, 174 to 194, 200 to 220, 226 to 248, and 301 to 321; these read MSLLVWGATLISGFIIVFALM, TMGGLLFIIAILVTTLWVGGW, LQPTTWILMFILVLYGALGFW, GLKAWQKLLGQVIGAVILTLV, LGVWSLGIWYMLFAIIWLVGF, GLDGLVAGQATIAFGAYAVIA, YNVMLFCLAVVGSLLGFFVYN, IFMGDMGSLALGGALAAVSILLH, and IDIVFWSIGLVAAVISVATII.

It belongs to the glycosyltransferase 4 family. MraY subfamily. Mg(2+) is required as a cofactor.

Its subcellular location is the cell membrane. It carries out the reaction UDP-N-acetyl-alpha-D-muramoyl-L-alanyl-gamma-D-glutamyl-L-lysyl-D-alanyl-D-alanine + di-trans,octa-cis-undecaprenyl phosphate = Mur2Ac(oyl-L-Ala-gamma-D-Glu-L-Lys-D-Ala-D-Ala)-di-trans,octa-cis-undecaprenyl diphosphate + UMP. It functions in the pathway cell wall biogenesis; peptidoglycan biosynthesis. Its function is as follows. Catalyzes the initial step of the lipid cycle reactions in the biosynthesis of the cell wall peptidoglycan: transfers peptidoglycan precursor phospho-MurNAc-pentapeptide from UDP-MurNAc-pentapeptide onto the lipid carrier undecaprenyl phosphate, yielding undecaprenyl-pyrophosphoryl-MurNAc-pentapeptide, known as lipid I. This chain is Phospho-N-acetylmuramoyl-pentapeptide-transferase, found in Lactiplantibacillus plantarum (strain ATCC BAA-793 / NCIMB 8826 / WCFS1) (Lactobacillus plantarum).